The sequence spans 101 residues: NADH-quinone oxidoreductase subunit K (101 aa).

Helical transmembrane passes span 4–24 (LGYFLIIGAILFGLGFAGIII), 30–50 (IVLLMCIELMLLAVNTNFIAF), and 61–81 (IFVFFILTVAAAESAIGLAIL).

It belongs to the complex I subunit 4L family. NDH-1 is composed of 14 different subunits. Subunits NuoA, H, J, K, L, M, N constitute the membrane sector of the complex.

It is found in the cell inner membrane. The catalysed reaction is a quinone + NADH + 5 H(+)(in) = a quinol + NAD(+) + 4 H(+)(out). NDH-1 shuttles electrons from NADH, via FMN and iron-sulfur (Fe-S) centers, to quinones in the respiratory chain. The immediate electron acceptor for the enzyme in this species is believed to be ubiquinone. Couples the redox reaction to proton translocation (for every two electrons transferred, four hydrogen ions are translocated across the cytoplasmic membrane), and thus conserves the redox energy in a proton gradient. In Coxiella burnetii (strain CbuG_Q212) (Coxiella burnetii (strain Q212)), this protein is NADH-quinone oxidoreductase subunit K.